The primary structure comprises 410 residues: Regulator of microtubule dynamics protein 2 (410 aa).

The helical transmembrane segment at Ile10–Tyr27 threads the bilayer. Ser51 bears the Phosphoserine mark. Positions Phe68 to Glu110 form a coiled coil. Position 121 is a phosphoserine (Ser121). Over residues Pro122–Leu131 the composition is skewed to basic residues. Positions Pro122–Gly151 are disordered. Residue Thr139 is modified to Phosphothreonine. Tyr152 carries the phosphotyrosine modification. Thr154 and Thr157 each carry phosphothreonine.

Belongs to the RMDN family. In terms of assembly, interacts with microtubules.

Its subcellular location is the membrane. It localises to the cytoplasm. The protein resides in the cytoskeleton. It is found in the spindle. The protein localises to the spindle pole. The chain is Regulator of microtubule dynamics protein 2 (RMDN2) from Macaca fascicularis (Crab-eating macaque).